The following is a 302-amino-acid chain: GrpE protein homolog 1, mitochondrial (302 aa).

The transit peptide at 1-39 directs the protein to the mitochondrion; that stretch reads MLVSRVLSRVSRSAGLRSSFSSVVTPKRNQIPIVASRFH. Residues 77–97 form a disordered region; sequence SAEPKGNESNTEVPKTGETSE.

This sequence belongs to the GrpE family. In terms of assembly, probable component of the PAM complex, at least composed of SSC1 (mtHsp70), MGE1, TIM44, PAM16/TIM16, PAM17 and PAM18/TIM14. Interacts with SSQ1.

It localises to the mitochondrion matrix. Essential component of the PAM complex, a complex required for the translocation of transit peptide-containing proteins from the inner membrane into the mitochondrial matrix in an ATP-dependent manner. Seems to control the nucleotide-dependent binding of mitochondrial HSP70 to substrate proteins. Binds ATP. Interacts with copper ions Cu(2+). The sequence is that of GrpE protein homolog 1, mitochondrial from Arabidopsis thaliana (Mouse-ear cress).